A 350-amino-acid polypeptide reads, in one-letter code: UBX domain-containing protein 2B (350 aa).

The segment covering 1 to 29 has biased composition (acidic residues); that stretch reads MEERENSEEGDDGAGEEEEEDQGSGEDGG. The tract at residues 1-46 is disordered; sequence MEERENSEEGDDGAGEEEEEDQGSGEDGGEVGAEREQEAELKDSLR. Basic and acidic residues predominate over residues 32 to 45; the sequence is GAEREQEAELKDSL. The region spanning 160 to 225 is the SEP domain; sequence EIQILLKLWS…MEDHQDQEYI (66 aa). In terms of domain architecture, UBX spans 271-348; it reads EHVPTTKIQI…DILNTVILQR (78 aa).

Belongs to the NSFL1C family.

It is found in the nucleus. The protein localises to the cytoplasm. The protein resides in the cytosol. Its subcellular location is the endoplasmic reticulum. It localises to the golgi apparatus. It is found in the cytoskeleton. The protein localises to the microtubule organizing center. The protein resides in the centrosome. Its function is as follows. Adapter protein required for Golgi and endoplasmic reticulum biogenesis. Involved in Golgi and endoplasmic reticulum maintenance during interphase and in their reassembly at the end of mitosis. Regulates the centrosomal levels of kinase aurka-a/Aurora A during mitotic progression by promoting aurka-a removal from centrosomes in prophase. Also, regulates spindle orientation during mitosis. This chain is UBX domain-containing protein 2B (ubxn2b), found in Xenopus laevis (African clawed frog).